The following is a 214-amino-acid chain: Exosome complex component RRP46 homolog (214 aa).

The protein belongs to the RNase PH family. Homodimer. Component of the RNA exosome complex. Interacts with crn-4; interaction promotes the DNase activity of crn-4. Interacts with crn-3, cps-6 and cyn-13.

The protein localises to the cytoplasm. Its subcellular location is the nucleus. Its function is as follows. Non-catalytic component of the RNA exosome complex which has 3'-&gt;5' exoribonuclease activity and participates in a multitude of cellular RNA processing and degradation events. Involved in apoptotic DNA degradation. In vitro, does not bind or digest single-stranded RNA. In vitro, binds to double-stranded DNA without detectable DNase activity. In Caenorhabditis elegans, this protein is Exosome complex component RRP46 homolog.